Here is a 489-residue protein sequence, read N- to C-terminus: Acetyl-coenzyme A carboxylase carboxyl transferase subunit beta, chloroplastic (489 aa).

The 265-residue stretch at Leu225 to Lys489 folds into the CoA carboxyltransferase N-terminal domain. Residues Cys229, Cys232, Cys245, and Cys248 each contribute to the Zn(2+) site. The C4-type zinc-finger motif lies at Cys229–Cys248.

The protein belongs to the AccD/PCCB family. In terms of assembly, acetyl-CoA carboxylase is a heterohexamer composed of biotin carboxyl carrier protein, biotin carboxylase and 2 subunits each of ACCase subunit alpha and ACCase plastid-coded subunit beta (accD). Zn(2+) is required as a cofactor.

The protein localises to the plastid. It is found in the chloroplast stroma. It carries out the reaction N(6)-carboxybiotinyl-L-lysyl-[protein] + acetyl-CoA = N(6)-biotinyl-L-lysyl-[protein] + malonyl-CoA. It participates in lipid metabolism; malonyl-CoA biosynthesis; malonyl-CoA from acetyl-CoA: step 1/1. Component of the acetyl coenzyme A carboxylase (ACC) complex. Biotin carboxylase (BC) catalyzes the carboxylation of biotin on its carrier protein (BCCP) and then the CO(2) group is transferred by the transcarboxylase to acetyl-CoA to form malonyl-CoA. The chain is Acetyl-coenzyme A carboxylase carboxyl transferase subunit beta, chloroplastic from Brassica napus (Rape).